The primary structure comprises 125 residues: uncharacterized protein (125 aa).

The Cupin type-2 domain occupies isoleucine 45–cysteine 110.

This is an uncharacterized protein from Methanocaldococcus jannaschii (strain ATCC 43067 / DSM 2661 / JAL-1 / JCM 10045 / NBRC 100440) (Methanococcus jannaschii).